A 372-amino-acid chain; its full sequence is Peroxisomal biogenesis factor 3 (372 aa).

Residues 1 to 15 (MLRSMWNFLKRHKKK) are Cytoplasmic-facing. A targeting to peroxisomes region spans residues 1–45 (MLRSMWNFLKRHKKKCIFLGTVLGGVYILGKYGQKKIREIQEREA). A helical membrane pass occupies residues 16 to 36 (CIFLGTVLGGVYILGKYGQKK). Over 37 to 116 (IREIQEREAA…LKIISFTRSI (80 aa)) the chain is Peroxisomal. Residues 117 to 140 (VAVYSTCMLVVLLRVQLNIIGGYI) traverse the membrane as a helical segment. Residues 120 to 136 (YSTCMLVVLLRVQLNII) form an interaction with PEX19 region. Topologically, residues 141–372 (YLDNATVGKN…AFSTPQQLEK (232 aa)) are cytoplasmic.

The protein belongs to the peroxin-3 family. In terms of assembly, interacts with PEX19. Identified in all tissues analyzed, with the strongest expression in liver and in testis.

The protein resides in the peroxisome membrane. Its function is as follows. Involved in peroxisome biosynthesis and integrity. Assembles membrane vesicles before the matrix proteins are translocated. As a docking factor for PEX19, is necessary for the import of peroxisomal membrane proteins in the peroxisomes. This is Peroxisomal biogenesis factor 3 (Pex3) from Mus musculus (Mouse).